Here is a 469-residue protein sequence, read N- to C-terminus: ATP-dependent protease ATPase subunit HslU (469 aa).

ATP is bound by residues I21, 63–68 (GVGKTE), D282, E347, and R419.

It belongs to the ClpX chaperone family. HslU subfamily. As to quaternary structure, a double ring-shaped homohexamer of HslV is capped on each side by a ring-shaped HslU homohexamer. The assembly of the HslU/HslV complex is dependent on binding of ATP.

Its subcellular location is the cytoplasm. In terms of biological role, ATPase subunit of a proteasome-like degradation complex; this subunit has chaperone activity. The binding of ATP and its subsequent hydrolysis by HslU are essential for unfolding of protein substrates subsequently hydrolyzed by HslV. HslU recognizes the N-terminal part of its protein substrates and unfolds these before they are guided to HslV for hydrolysis. The polypeptide is ATP-dependent protease ATPase subunit HslU (Petrotoga mobilis (strain DSM 10674 / SJ95)).